The primary structure comprises 538 residues: Small ribosomal subunit protein uS3m (538 aa).

A disordered region spans residues 111–134 (SSEGTEEERNEVRGRGAGKRVESI). Residues 120–134 (NEVRGRGAGKRVESI) are compositionally biased toward basic and acidic residues.

It belongs to the universal ribosomal protein uS3 family.

The protein resides in the mitochondrion. This chain is Small ribosomal subunit protein uS3m (RPS3), found in Oryza sativa subsp. japonica (Rice).